A 781-amino-acid chain; its full sequence is Acyl-CoA dehydrogenase family member 11 (781 aa).

K177 carries the N6-acetyllysine modification. At Y325 the chain carries Phosphotyrosine. K392 carries the N6-succinyllysine modification. FAD is bound by residues F505–S515, A513–S515, W539–S541, and S541. S515 is a binding site for substrate. Position 630 to 633 (G630 to R633) interacts with substrate. FAD contacts are provided by residues R658, Q728, and Q728–G732. G756 serves as a coordination point for substrate. FAD contacts are provided by residues P757–E759 and E759.

This sequence belongs to the acyl-CoA dehydrogenase family. As to quaternary structure, homodimer. Requires FAD as cofactor.

Its subcellular location is the peroxisome. It localises to the mitochondrion membrane. It catalyses the reaction a 2,3-saturated acyl-CoA + oxidized [electron-transfer flavoprotein] + H(+) = a (2E)-enoyl-CoA + reduced [electron-transfer flavoprotein]. It carries out the reaction docosanoyl-CoA + oxidized [electron-transfer flavoprotein] + H(+) = (2E)-docosenoyl-CoA + reduced [electron-transfer flavoprotein]. The enzyme catalyses tetracosanoyl-CoA + oxidized [electron-transfer flavoprotein] + H(+) = (2E)-tetracosenoyl-CoA + reduced [electron-transfer flavoprotein]. The catalysed reaction is eicosanoyl-CoA + oxidized [electron-transfer flavoprotein] + H(+) = (2E)-eicosenoyl-CoA + reduced [electron-transfer flavoprotein]. It catalyses the reaction hexacosanoyl-CoA + oxidized [electron-transfer flavoprotein] + H(+) = (2E)-hexacosenoyl-CoA + reduced [electron-transfer flavoprotein]. It carries out the reaction tricosanoyl-CoA + oxidized [electron-transfer flavoprotein] + H(+) = (2E)-tricosenoyl-CoA + reduced [electron-transfer flavoprotein]. It functions in the pathway lipid metabolism; fatty acid beta-oxidation. Acyl-CoA dehydrogenase, that exhibits maximal activity towards saturated C22-CoA. Probably participates in beta-oxydation and energy production but could also play a role in the metabolism of specific fatty acids to control fatty acids composition of cellular lipids in brain. The sequence is that of Acyl-CoA dehydrogenase family member 11 (ACAD11) from Pongo abelii (Sumatran orangutan).